The primary structure comprises 406 residues: Methyltransferase cfoD (406 aa).

Positions 270 and 312 each coordinate S-adenosyl-L-methionine. Residue His315 is the Proton acceptor of the active site.

Belongs to the class I-like SAM-binding methyltransferase superfamily. Cation-independent O-methyltransferase family.

Its pathway is secondary metabolite biosynthesis; flavonoid biosynthesis. Methyltransferase; part of the gene cluster that mediates the biosynthesis of chlorflavonin, a fungal flavonoid with acetolactate synthase inhibitory activity. Within the pathway, cfoD is responsible for the methylation at position C3-OH of flavonoid. The pathway begins with the PKS-NRPS hybrid synthetase cfoA that uses benzoic acid or p-hydroxybenzoic acid as a starter unit with four rounds of chain elongation using malonyl-CoA to form the chalcone skeleton. Then, a new type of chalcone isomerase, cfoK, catalyzes the conversion of the chalcone into a flavanone by a histidine-mediated oxa-Michael addition mechanism. The desaturation of flavanone to flavone is catalyzed by a new type of flavone synthase, the flavin mononucleotide (FMN)-dependent oxidoreductase cfoJ. Monooxygenases cfoF, cfoG, and P450 cfoH are responsible for the hydroxylation of the flavonoid skeleton at sites C3, C8, and C2', respectively. Like cfoF, the dehydratase cfoI also plays a role in the hydroxylation of position C3. Methyltransferases cfoB, cfoC, and cfoD then catalyze the methylation of C7-OH, C8-OH, and C3-OH, respectively. Finally, the monooxygenase cfoE is responsible for the chlorination of flavonoid at position C3'. The chain is Methyltransferase cfoD from Aspergillus candidus.